A 299-amino-acid chain; its full sequence is Lathosterol oxidase (299 aa).

3 consecutive transmembrane segments (helical) span residues Val-32 to Leu-52, Phe-79 to Leu-99, and Ile-117 to Ile-137. The region spanning Ile-124–Gly-252 is the Fatty acid hydroxylase domain. The short motif at His-138–His-143 is the Histidine box-1 element. A Histidine box-2 motif is present at residues His-151–His-155. The Histidine box-3 motif lies at His-228–His-233. Ser-253 is subject to Phosphoserine.

The protein belongs to the sterol desaturase family. The cofactor is Fe cation.

Its subcellular location is the endoplasmic reticulum membrane. The catalysed reaction is a Delta(7)-sterol + 2 Fe(II)-[cytochrome b5] + O2 + 2 H(+) = a Delta(5),Delta(7)-sterol + 2 Fe(III)-[cytochrome b5] + 2 H2O. It catalyses the reaction lathosterol + 2 Fe(II)-[cytochrome b5] + O2 + 2 H(+) = 7-dehydrocholesterol + 2 Fe(III)-[cytochrome b5] + 2 H2O. The enzyme catalyses 5alpha-cholesta-7,24-dien-3beta-ol + 2 Fe(II)-[cytochrome b5] + O2 + 2 H(+) = 7-dehydrodesmosterol + 2 Fe(III)-[cytochrome b5] + 2 H2O. Its pathway is steroid biosynthesis; cholesterol biosynthesis. Functionally, catalyzes the penultimate step of the biosynthesis of cholesterol, the dehydrogenation of lathosterol into 7-dehydrocholesterol (7-DHC). Cholesterol is the major sterol component in mammalian membranes and a precursor for bile acid and steroid hormone synthesis. In addition to its essential role in cholesterol biosynthesis, it also indirectly regulates ferroptosis through the production of 7-DHC. By diverting the spread of damage caused by peroxyl radicals from the phospholipid components to its sterol nucleus, 7-DHC prevents this form of cell death. The protein is Lathosterol oxidase of Rattus norvegicus (Rat).